The sequence spans 433 residues: Serine/threonine-protein kinase STK11 (433 aa).

Phosphoserine is present on serine 31. Residues lysine 44 and lysine 48 each carry the N6-acetyllysine modification. The segment at 45-90 is sufficient for interaction with SIRT1; sequence LIGKYLMGDLLGEGSYGKVKEVLDSETLCRRAVKILKKKKLRRIPN. One can recognise a Protein kinase domain in the interval 49–309; that stretch reads YLMGDLLGEG…IRQIRQHSWF (261 aa). ATP-binding positions include 55–63 and lysine 78; that span reads LGEGSYGKV. 2 positions are modified to N6-acetyllysine: lysine 96 and lysine 97. Aspartate 176 acts as the Proton acceptor in catalysis. Threonine 189 carries the phosphothreonine; by autocatalysis modification. N6-acetyllysine is present on residues lysine 296 and lysine 311. The segment at 312–331 is disordered; it reads KHPPAEAPVPIPPSPDTKDR. Residues 316–326 are compositionally biased toward pro residues; the sequence is AEAPVPIPPSP. Serine 325 bears the Phosphoserine mark. Threonine 336 carries the phosphothreonine; by autocatalysis modification. The residue at position 363 (threonine 363) is a Phosphothreonine; by ATM and autocatalysis. The interval 397-433 is disordered; the sequence is AAQLSTKSRAEGRAPNPARKACSASSKIRRLSACKQQ. Residues glutamine 399 and serine 401 each carry the phosphoserine modification. At lysine 416 the chain carries N6-acetyllysine. Cysteine 418 is lipidated: S-palmitoyl cysteine. N6-acetyllysine is present on lysine 423. Residues 423–433 show a composition bias toward basic residues; that stretch reads KIRRLSACKQQ. At serine 428 the chain carries Phosphoserine; by autocatalysis, PKA, PKC/PRKCZ and RPS6KA1. Cysteine 430 carries the post-translational modification Cysteine methyl ester. Cysteine 430 carries S-farnesyl cysteine lipidation. Lysine 431 bears the N6-acetyllysine mark. Residues 431–433 constitute a propeptide, removed in mature form; the sequence is KQQ.

Belongs to the protein kinase superfamily. CAMK Ser/Thr protein kinase family. LKB1 subfamily. Catalytic component of a trimeric complex composed of STK11/LKB1, STRAD (STRADA or STRADB) and CAB39/MO25 (CAB39/MO25alpha or CAB39L/MO25beta): the complex tethers STK11/LKB1 in the cytoplasm and stimulates its catalytic activity. Found in a ternary complex composed of SMAD4, STK11/LKB1 and STK11IP. Interacts with p53/TP53, SMAD4, STK11IP and WDR6. Interacts with NR4A1. Interacts with NISCH; this interaction may increase STK11 activity. Interacts with PTEN; leading to PTEN phosphorylation. Interacts with SIRT1; the interaction deacetylates STK11. Interacts with CDKN1A. Mg(2+) is required as a cofactor. It depends on Mn(2+) as a cofactor. Phosphorylated by ATM at Thr-363 following ionizing radiation (IR). Phosphorylation at Ser-428 by RPS6KA1 and/or some PKA is required to inhibit cell growth. Phosphorylation at Ser-428 is also required during neuronal polarization to mediate phosphorylation of BRSK1 and BRSK2. Phosphorylation by PKC/PRKCZ at Ser-399 in isoform 2 promotes metformin (or peroxynitrite)-induced nuclear export of STK11 and activation of AMPK. UV radiation-induced phosphorylation at Thr-363 mediates CDKN1A degradation. Post-translationally, acetylated. Deacetylation at Lys-48 enhances cytoplasmic localization and kinase activity in vitro. In terms of tissue distribution, ubiquitously expressed. Strongest expression in testis and fetal liver.

Its subcellular location is the nucleus. It localises to the cytoplasm. The protein localises to the membrane. It is found in the mitochondrion. The catalysed reaction is L-seryl-[protein] + ATP = O-phospho-L-seryl-[protein] + ADP + H(+). It carries out the reaction L-threonyl-[protein] + ATP = O-phospho-L-threonyl-[protein] + ADP + H(+). Its activity is regulated as follows. Activated by forming a complex with STRAD (STRADA or STRADB) and CAB39/MO25 (CAB39/MO25alpha or CAB39L/MO25beta): STRADA (or STRADB)-binding promotes a conformational change of STK11/LKB1 in an active conformation, which is stabilized by CAB39/MO25alpha (or CAB39L/MO25beta) interacting with the STK11/LKB1 activation loop. Sequestration in the nucleus by NR4A1 prevents it from phosphorylating and activating cytoplasmic AMPK. Tumor suppressor serine/threonine-protein kinase that controls the activity of AMP-activated protein kinase (AMPK) family members, thereby playing a role in various processes such as cell metabolism, cell polarity, apoptosis and DNA damage response. Acts by phosphorylating the T-loop of AMPK family proteins, thus promoting their activity: phosphorylates PRKAA1, PRKAA2, BRSK1, BRSK2, MARK1, MARK2, MARK3, MARK4, NUAK1, NUAK2, SIK1, SIK2, SIK3 and SNRK but not MELK. Also phosphorylates non-AMPK family proteins such as STRADA, PTEN and possibly p53/TP53. Acts as a key upstream regulator of AMPK by mediating phosphorylation and activation of AMPK catalytic subunits PRKAA1 and PRKAA2 and thereby regulates processes including: inhibition of signaling pathways that promote cell growth and proliferation when energy levels are low, glucose homeostasis in liver, activation of autophagy when cells undergo nutrient deprivation, and B-cell differentiation in the germinal center in response to DNA damage. Also acts as a regulator of cellular polarity by remodeling the actin cytoskeleton. Required for cortical neuron polarization by mediating phosphorylation and activation of BRSK1 and BRSK2, leading to axon initiation and specification. Involved in DNA damage response: interacts with p53/TP53 and recruited to the CDKN1A/WAF1 promoter to participate in transcription activation. Able to phosphorylate p53/TP53; the relevance of such result in vivo is however unclear and phosphorylation may be indirect and mediated by downstream STK11/LKB1 kinase NUAK1. Also acts as a mediator of p53/TP53-dependent apoptosis via interaction with p53/TP53: translocates to the mitochondrion during apoptosis and regulates p53/TP53-dependent apoptosis pathways. Regulates UV radiation-induced DNA damage response mediated by CDKN1A. In association with NUAK1, phosphorylates CDKN1A in response to UV radiation and contributes to its degradation which is necessary for optimal DNA repair. In terms of biological role, has a role in spermiogenesis. The chain is Serine/threonine-protein kinase STK11 from Homo sapiens (Human).